Reading from the N-terminus, the 1935-residue chain is Myosin-7 (1935 aa).

Residues 32-81 (DLKKDVYVPDDKEEFVKAKILSREGGKVTAETEHGKTVTVKEDQVLQQNP) enclose the Myosin N-terminal SH3-like domain. Positions 85-778 (DKIEDMAMLT…LLGLLEEMRD (694 aa)) constitute a Myosin motor domain. At Lys-129 the chain carries N6,N6,N6-trimethyllysine. An ATP-binding site is contributed by 178–185 (GESGAGKT). Thr-378 carries the post-translational modification Phosphothreonine. Actin-binding regions lie at residues 655-677 (LNKL…IPNE) and 757-771 (KFGH…GLLG). The region spanning 781–810 (LSRIITRIQAQSRGVLSRMEFKKLLERRDS) is the IQ domain. A coiled-coil region spans residues 839–1935 (LLKSAETEKE…DIGTKGLNEE (1097 aa)). 2 positions are modified to phosphoserine: Ser-1137 and Ser-1269. Thr-1282 is subject to Phosphothreonine. A Phosphotyrosine modification is found at Tyr-1308. Position 1309 is a phosphothreonine (Thr-1309). Ser-1510 bears the Phosphoserine mark. Phosphothreonine is present on Thr-1513. Residues 1907 to 1935 (EERADIAESQVNKLRAKSRDIGTKGLNEE) are disordered. The segment covering 1923-1935 (KSRDIGTKGLNEE) has biased composition (basic and acidic residues).

The protein belongs to the TRAFAC class myosin-kinesin ATPase superfamily. Myosin family. Muscle myosin is a hexameric protein that consists of 2 heavy chain subunits (MHC), 2 alkali light chain subunits (MLC) and 2 regulatory light chain subunits (MLC-2). Interacts with ECPAS. Interacts (via C-terminus) with LRRC39.

Its subcellular location is the cytoplasm. The protein resides in the myofibril. It is found in the sarcomere. In terms of biological role, myosins are actin-based motor molecules with ATPase activity essential for muscle contraction. Forms regular bipolar thick filaments that, together with actin thin filaments, constitute the fundamental contractile unit of skeletal and cardiac muscle. The chain is Myosin-7 (MYH7) from Sus scrofa (Pig).